The sequence spans 352 residues: Protein RecA (352 aa).

65–72 (GPESSGKT) contributes to the ATP binding site. The disordered stretch occupies residues 333–352 (VKAAANREPVEEVEEADTDI). Positions 343-352 (EEVEEADTDI) are enriched in acidic residues.

This sequence belongs to the RecA family.

Its subcellular location is the cytoplasm. In terms of biological role, can catalyze the hydrolysis of ATP in the presence of single-stranded DNA, the ATP-dependent uptake of single-stranded DNA by duplex DNA, and the ATP-dependent hybridization of homologous single-stranded DNAs. It interacts with LexA causing its activation and leading to its autocatalytic cleavage. This is Protein RecA from Pseudomonas fluorescens.